The chain runs to 652 residues: UvrABC system protein C (652 aa).

The region spanning 20 to 99 (PEPGCYLMRD…IKNHQPHFNV (80 aa)) is the GIY-YIG domain. Residues 209–244 (DELQRLLDEQMNRYAERLDFESAARVRDQLQGLDQL) form the UVR domain.

The protein belongs to the UvrC family. Interacts with UvrB in an incision complex.

Its subcellular location is the cytoplasm. Its function is as follows. The UvrABC repair system catalyzes the recognition and processing of DNA lesions. UvrC both incises the 5' and 3' sides of the lesion. The N-terminal half is responsible for the 3' incision and the C-terminal half is responsible for the 5' incision. The chain is UvrABC system protein C from Parasynechococcus marenigrum (strain WH8102).